Here is a 623-residue protein sequence, read N- to C-terminus: Chaperone protein DnaK (623 aa).

The residue at position 175 (T175) is a Phosphothreonine; by autocatalysis. The tract at residues 580 to 623 (PEGAQGAGFDPNNMGGANAGNASAENDKKDDNVVDADYKVEDDK) is disordered. Residues 591–603 (NNMGGANAGNASA) are compositionally biased toward low complexity. Residues 604-623 (ENDKKDDNVVDADYKVEDDK) show a composition bias toward basic and acidic residues.

The protein belongs to the heat shock protein 70 family.

Functionally, acts as a chaperone. The polypeptide is Chaperone protein DnaK (Clostridium botulinum (strain Okra / Type B1)).